Reading from the N-terminus, the 153-residue chain is Peritrophin-1 (153 aa).

An N-terminal signal peptide occupies residues 1-17 (MKVSASLVLLLAAAVLA). 2 Chitin-binding type-2 domains span residues 18–79 (DDRC…QCAP) and 92–153 (SPNC…QCEE). Cystine bridges form between Cys-56–Cys-69 and Cys-130–Cys-143. An N-linked (GlcNAc...) asparagine glycan is attached at Asn-63.

Post-translationally, glycosylated. As to expression, adult peritrophic membrane.

Functionally, binds chitin but not cellulose. May be involved in the spatial organization of PM. This Anopheles gambiae (African malaria mosquito) protein is Peritrophin-1 (Aper1).